We begin with the raw amino-acid sequence, 450 residues long: Tubulin alpha-1 chain (450 aa).

Glutamine 11 provides a ligand contact to GTP. An N6-acetyllysine modification is found at lysine 40. GTP is bound by residues glutamate 71, serine 140, glycine 144, threonine 145, threonine 179, asparagine 206, and asparagine 228. Residue glutamate 71 participates in Mg(2+) binding. The active site involves glutamate 254.

This sequence belongs to the tubulin family. As to quaternary structure, dimer of alpha and beta chains. A typical microtubule is a hollow water-filled tube with an outer diameter of 25 nm and an inner diameter of 15 nM. Alpha-beta heterodimers associate head-to-tail to form protofilaments running lengthwise along the microtubule wall with the beta-tubulin subunit facing the microtubule plus end conferring a structural polarity. Microtubules usually have 13 protofilaments but different protofilament numbers can be found in some organisms and specialized cells. Interacts with Ote. Requires Mg(2+) as cofactor. Post-translationally, undergoes a tyrosination/detyrosination cycle, the cyclic removal and re-addition of a C-terminal tyrosine residue by the enzymes tubulin tyrosine carboxypeptidase (TTCP) and tubulin tyrosine ligase (TTL), respectively. Acetylation of alpha chains at Lys-40 stabilizes microtubules and affects affinity and processivity of microtubule motors. This modification has a role in multiple cellular functions, ranging from cell motility, cell cycle progression or cell differentiation to intracellular trafficking and signaling. During the early stages of oogenesis lky/Alpha-tubulin N-acetyltransferase 2 is the main acetyltransferase responsible for Lys-40 acetylation in germline cells while Atat/alpha-tubulin N-acetyltransferase 1 is the main acetyltransferase responsible for Lys-40 acetylation in somatic cells.

Its subcellular location is the cytoplasm. It localises to the cytoskeleton. The enzyme catalyses GTP + H2O = GDP + phosphate + H(+). In terms of biological role, tubulin is the major constituent of microtubules, a cylinder consisting of laterally associated linear protofilaments composed of alpha- and beta-tubulin heterodimers. Microtubules grow by the addition of GTP-tubulin dimers to the microtubule end, where a stabilizing cap forms. Below the cap, tubulin dimers are in GDP-bound state, owing to GTPase activity of alpha-tubulin. The protein is Tubulin alpha-1 chain (alphaTub84B) of Drosophila melanogaster (Fruit fly).